We begin with the raw amino-acid sequence, 292 residues long: tRNA (guanine-N(7)-)-methyltransferase (292 aa).

Residues 1-54 (MLKRDQSEMDIEAETANMGKEEKESFVHKRQKYRQEQEEKRLAAKKGVSFEQPE) form a disordered region. A compositionally biased stretch (basic and acidic residues) spans 19 to 42 (GKEEKESFVHKRQKYRQEQEEKRL). S-adenosyl-L-methionine is bound by residues Gly-110, 133-134 (EI), 168-169 (NA), and Cys-188. Asp-191 is a catalytic residue. Residue 266–268 (TEE) coordinates S-adenosyl-L-methionine.

It belongs to the class I-like SAM-binding methyltransferase superfamily. TrmB family. In terms of assembly, forms a complex with TRM82.

It is found in the nucleus. It carries out the reaction guanosine(46) in tRNA + S-adenosyl-L-methionine = N(7)-methylguanosine(46) in tRNA + S-adenosyl-L-homocysteine. It functions in the pathway tRNA modification; N(7)-methylguanine-tRNA biosynthesis. Its function is as follows. Catalyzes the formation of N(7)-methylguanine at position 46 (m7G46) in tRNA. The sequence is that of tRNA (guanine-N(7)-)-methyltransferase from Yarrowia lipolytica (strain CLIB 122 / E 150) (Yeast).